The primary structure comprises 20 residues: Succinate--CoA ligase [ADP-forming] subunit beta, mitochondrial (20 aa).

The region spanning 8–20 (SMELLQEAGVSIP) is the ATP-grasp domain.

The protein belongs to the succinate/malate CoA ligase beta subunit family. ATP-specific subunit beta subfamily. As to quaternary structure, heterodimer of an alpha and a beta subunit. The beta subunit determines specificity for ATP. Interacts with ALAS2.

Its subcellular location is the mitochondrion. The enzyme catalyses succinate + ATP + CoA = succinyl-CoA + ADP + phosphate. It participates in carbohydrate metabolism; tricarboxylic acid cycle; succinate from succinyl-CoA (ligase route): step 1/1. Its function is as follows. ATP-specific succinyl-CoA synthetase functions in the citric acid cycle (TCA), coupling the hydrolysis of succinyl-CoA to the synthesis of ATP and thus represents the only step of substrate-level phosphorylation in the TCA. The beta subunit provides nucleotide specificity of the enzyme and binds the substrate succinate, while the binding sites for coenzyme A and phosphate are found in the alpha subunit. This Canis lupus familiaris (Dog) protein is Succinate--CoA ligase [ADP-forming] subunit beta, mitochondrial.